We begin with the raw amino-acid sequence, 805 residues long: Transducer protein BasT (805 aa).

Transmembrane regions (helical) follow at residues Phe-25–Leu-45 and Asn-296–Gly-316. HAMP domains lie at Arg-317 to Ser-370 and Glu-437 to Ala-490. The Methyl-accepting transducer domain occupies Ser-509–Thr-745. Residues Ile-513–Asp-532 are disordered. The segment covering Ala-516 to Asp-526 has biased composition (polar residues). 3 positions are modified to glutamate methyl ester (Glu): Glu-554, Glu-736, and Glu-763. Residues Ala-752 to Leu-779 form a disordered region. The span at Glu-754–Ala-773 shows a compositional bias: low complexity.

This sequence belongs to the methyl-accepting chemotaxis (MCP) protein family. Interacts with CheA, CheY, CheW1 and CheW2. Methylated by CheR.

It is found in the cell membrane. Its function is as follows. Mediates chemotaxis towards five attractant amino acids (leucine, isoleucine, valine, methionine and cysteine). Probably transduces the signal from the substrate-binding protein BasB to the histidine kinase CheA. The chain is Transducer protein BasT (basT) from Halobacterium salinarum (strain ATCC 29341 / DSM 671 / R1).